A 716-amino-acid polypeptide reads, in one-letter code: Fatty acid oxidation complex subunit alpha (716 aa).

The segment at 1 to 189 is enoyl-CoA hydratase/isomerase; sequence MIYQSPTIQV…KVGAIDAVVA (189 aa). Asp296 contributes to the substrate binding site. The interval 311–716 is 3-hydroxyacyl-CoA dehydrogenase; the sequence is KDVNQAAVLG…AANNGSYYQA (406 aa). NAD(+) is bound by residues Met324, Asp343, 400-402, Lys407, and Ser429; that span reads VVE. His450 (for 3-hydroxyacyl-CoA dehydrogenase activity) is an active-site residue. An NAD(+)-binding site is contributed by Asn453. The substrate site is built by Asn500 and Tyr660.

It in the N-terminal section; belongs to the enoyl-CoA hydratase/isomerase family. This sequence in the C-terminal section; belongs to the 3-hydroxyacyl-CoA dehydrogenase family. In terms of assembly, heterotetramer of two alpha chains (FadB) and two beta chains (FadA).

The enzyme catalyses a (3S)-3-hydroxyacyl-CoA + NAD(+) = a 3-oxoacyl-CoA + NADH + H(+). The catalysed reaction is a (3S)-3-hydroxyacyl-CoA = a (2E)-enoyl-CoA + H2O. It carries out the reaction a 4-saturated-(3S)-3-hydroxyacyl-CoA = a (3E)-enoyl-CoA + H2O. It catalyses the reaction (3S)-3-hydroxybutanoyl-CoA = (3R)-3-hydroxybutanoyl-CoA. The enzyme catalyses a (3Z)-enoyl-CoA = a 4-saturated (2E)-enoyl-CoA. The catalysed reaction is a (3E)-enoyl-CoA = a 4-saturated (2E)-enoyl-CoA. It participates in lipid metabolism; fatty acid beta-oxidation. In terms of biological role, involved in the aerobic and anaerobic degradation of long-chain fatty acids via beta-oxidation cycle. Catalyzes the formation of 3-oxoacyl-CoA from enoyl-CoA via L-3-hydroxyacyl-CoA. It can also use D-3-hydroxyacyl-CoA and cis-3-enoyl-CoA as substrate. The polypeptide is Fatty acid oxidation complex subunit alpha (Shewanella frigidimarina (strain NCIMB 400)).